The sequence spans 299 residues: Large ribosomal subunit protein uL29m (299 aa).

It belongs to the universal ribosomal protein uL29 family. As to quaternary structure, component of the mitochondrial large ribosomal subunit. Mature mitochondrial ribosomes consist of a small (37S) and a large (54S) subunit. The 37S subunit contains at least 33 different proteins and 1 molecule of RNA (15S). The 54S subunit contains at least 45 different proteins and 1 molecule of RNA (21S).

The protein localises to the mitochondrion. The protein is Large ribosomal subunit protein uL29m (MRPL4) of Scheffersomyces stipitis (strain ATCC 58785 / CBS 6054 / NBRC 10063 / NRRL Y-11545) (Yeast).